The primary structure comprises 2346 residues: Highly reducing polyketide synthase claI (2346 aa).

The Ketosynthase family 3 (KS3) domain maps to 10-412 (TPAIAVVGMA…GTNCHLIVED (403 aa)). Active-site for beta-ketoacyl synthase activity residues include cysteine 183, histidine 295, and histidine 335. Positions 530–842 (IFTGQGSQWP…EYFSALKRGE (313 aa)) are malonyl-CoA:ACP transacylase (MAT) domain. Serine 622 functions as the For malonyltransferase activity in the catalytic mechanism. The N-terminal hotdog fold stretch occupies residues 912–1048 (HDLLGSKILG…GLIRTSEEDS (137 aa)). The dehydratase (DH) domain stretch occupies residues 912–1213 (HDLLGSKILG…INGLRFSSVD (302 aa)). Residues 912–1218 (HDLLGSKILG…FSSVDLGSVQ (307 aa)) form the PKS/mFAS DH domain. Histidine 944 (proton acceptor; for dehydratase activity) is an active-site residue. The C-terminal hotdog fold stretch occupies residues 1060–1218 (IHATPAQVWY…FSSVDLGSVQ (159 aa)). The active-site Proton donor; for dehydratase activity is the aspartate 1124. An enoyl reductase (ER) domain region spans residues 1633–1946 (GSLEALQWTQ…SARHIGKILI (314 aa)). Residues 1972–2151 (TYLIVGGLRG…HSLDLGVVDA (180 aa)) form a ketoreductase (KR) domain region. The Carrier domain maps to 2258–2336 (SQLVEKAVTL…ALAEKMVSKV (79 aa)). Serine 2296 carries the O-(pantetheine 4'-phosphoryl)serine modification.

It depends on pantetheine 4'-phosphate as a cofactor.

It participates in secondary metabolite biosynthesis. Functionally, highly reducing polyketide synthase; part of the cla gene cluster that produces clavatol and ortho-quinone methide. The clavatol biosynthesis cluster cla and the terrestric acid cluster tra are both involved in the production of peniphenones and penilactones. The non-reducing PKS claF is responsible for the formation of clavatol from successive condensations of 3 malonyl-CoA units, presumably with a simple acetyl-CoA starter unit, and 2 methylation steps. The esterase claE probably collaborates with claF by catalyzing the hydrolysis of ACP-bound acyl intermediates to free the ACP from stalled intermediates. The clavatol oxidase claD then converts clavatol to hydroxyclavatol. Spontaneous dehydration of hydroxyclavatol leads to the accumulation of the highly active ortho-quinone methide. On the other hand, the PKS-NRPS hybrid traA is involved in the formation of crustosic acid, with the help of traB and traD. The polyketide synthase module (PKS) of traA is responsible for the synthesis of the polyketide backbone via the condensation of an acetyl-CoA starter unit with 3 malonyl-CoA units. The downstream nonribosomal peptide synthetase (NRPS) module then amidates the carboxyl end of the polyketide with L-malic acid. Because traA lacks a designated enoylreductase (ER) domain, the required activity is provided the enoyl reductase traG. Crustosic acid undergoes decarboxylation and isomerization to the terrestric acid, catalyzed by the 2-oxoglutarate-dependent dioxygenase traH. Both acids are further converted to the 2 gamma-butyrolactones (R)-5-methyltetronic acid and (S)-5-carboxylmethyltetronic acid, with involvement of the cytochrome P450 monooxygenase claJ. Spontaneous addition of the methide to these gamma-butyrolactones leads to peniphenone D and penilactone D, which undergo again stereospecific attacking by methide to give penilactones A and B. The function of the highly reducing polyketide synthase claI has not been investigated yet. The polypeptide is Highly reducing polyketide synthase claI (Penicillium crustosum (Blue mold fungus)).